Reading from the N-terminus, the 105-residue chain is uncharacterized protein (105 aa).

The disordered stretch occupies residues 58–105 (YRKKKPNHSRDNPRINSNLSTNYAQAKSVERSRSNSLNSGPNPLENAT). 2 stretches are compositionally biased toward polar residues: residues 71–82 (RINSNLSTNYAQ) and 91–105 (SNSL…ENAT).

The protein localises to the mitochondrion. This is an uncharacterized protein from Arabidopsis thaliana (Mouse-ear cress).